The sequence spans 365 residues: Heat-inducible transcription repressor HrcA (365 aa).

This sequence belongs to the HrcA family.

Functionally, negative regulator of class I heat shock genes (grpE-dnaK-dnaJ and groELS operons). Prevents heat-shock induction of these operons. This Trichormus variabilis (strain ATCC 29413 / PCC 7937) (Anabaena variabilis) protein is Heat-inducible transcription repressor HrcA.